The sequence spans 62 residues: Conotoxin Sr5.6 (62 aa).

Residues 1-22 (MRCLPVFVILLLLIASASSVDA) form the signal peptide. The propeptide occupies 23 to 44 (QLKTKDDVPLTSVHDNAKGTQH). Pro61 bears the Proline amide mark.

This sequence belongs to the conotoxin T superfamily. Contains 2 disulfide bonds that can be either 'C1-C3, C2-C4' or 'C1-C4, C2-C3', since these disulfide connectivities have been observed for conotoxins with cysteine framework V (for examples, see AC P0DQQ7 and AC P81755). In terms of tissue distribution, expressed by the venom duct.

Its subcellular location is the secreted. This Conus spurius (Alphabet cone) protein is Conotoxin Sr5.6.